A 179-amino-acid polypeptide reads, in one-letter code: Large ribosomal subunit protein uL5 (179 aa).

Belongs to the universal ribosomal protein uL5 family. In terms of assembly, part of the 50S ribosomal subunit; part of the 5S rRNA/L5/L18/L25 subcomplex. Contacts the 5S rRNA and the P site tRNA. Forms a bridge to the 30S subunit in the 70S ribosome.

In terms of biological role, this is one of the proteins that bind and probably mediate the attachment of the 5S RNA into the large ribosomal subunit, where it forms part of the central protuberance. In the 70S ribosome it contacts protein S13 of the 30S subunit (bridge B1b), connecting the 2 subunits; this bridge is implicated in subunit movement. Contacts the P site tRNA; the 5S rRNA and some of its associated proteins might help stabilize positioning of ribosome-bound tRNAs. The protein is Large ribosomal subunit protein uL5 of Yersinia pestis.